Here is a 31-residue protein sequence, read N- to C-terminus: Mu-conotoxin SmIIIA (31 aa).

The propeptide occupies 1-6 (PLFDKR). Q7 is subject to Pyrrolidone carboxylic acid. Disulfide bonds link C9-C21, C10-C27, and C16-C28. C28 carries the cysteine amide modification.

It belongs to the conotoxin M superfamily. SmIIIA' is a putative isoform where the N-terminal AA is missing. Expressed by the venom duct.

It is found in the secreted. In terms of biological role, mu-conotoxins block voltage-gated sodium channels (Nav). This toxin blocks rNav1.5/SCN5A (IC(50) is 1.3 uM), rNav1.6/SCN8A (IC(50) is 160 nM), rNav1.7/SCN9A (IC(50) is 1.3 uM), rNav1.1/SCN1A (K(d) is 3.8 nM), rNav1.2/SCN2A (K(d) is 1.3 nM), rNav1.4/SCN4A (K(d) is 0.22 nM), rNav1.6/SCN8A (K(d) is 69 nM), and rNav1.7/SCN9A (K(d) is 260 nM). This toxin is very potent but weakly discriminating among sodium channels. The block of these channels is modified when beta-subunits are coexpressed with alpha subunits. Hence, blocks of channels containing beta-1 and beta-3 subunits are more potent (compared to channels without beta subunits), whereas blocks of channels containing beta-2 and beta-4 subunits are less potent (compared to channels without beta subunits). The sequence is that of Mu-conotoxin SmIIIA from Conus stercusmuscarum (Fly-specked cone).